The sequence spans 487 residues: Bifunctional protein GlmU (487 aa).

The pyrophosphorylase stretch occupies residues 1–232; sequence MAVIVLAAGA…AAELAGVNDR (232 aa). UDP-N-acetyl-alpha-D-glucosamine-binding positions include 6-9, Lys20, Gln77, and 82-83; these read LAAG and GT. Residue Asp107 coordinates Mg(2+). Gly142, Glu157, Asn172, and Asn230 together coordinate UDP-N-acetyl-alpha-D-glucosamine. Residue Asn230 coordinates Mg(2+). The tract at residues 233–253 is linker; sequence VQLAAAGAELNRRTVTAAMRG. The tract at residues 254 to 487 is N-acetyltransferase; it reads GATIVDPATT…PTSTPQADQE (234 aa). Residues Arg335 and Lys353 each coordinate UDP-N-acetyl-alpha-D-glucosamine. Residue His365 is the Proton acceptor of the active site. 2 residues coordinate UDP-N-acetyl-alpha-D-glucosamine: Tyr368 and Asn379. Acetyl-CoA is bound by residues Ala382, 388-389, Ser407, and Ala425; that span reads NY. Residues 453–487 form a disordered region; that stretch reads AKKRPGTPAAEAGEAAAKRVAEGGSPTSTPQADQE. Positions 477-487 are enriched in polar residues; the sequence is SPTSTPQADQE.

In the N-terminal section; belongs to the N-acetylglucosamine-1-phosphate uridyltransferase family. This sequence in the C-terminal section; belongs to the transferase hexapeptide repeat family. Homotrimer. Mg(2+) is required as a cofactor.

The protein localises to the cytoplasm. It carries out the reaction alpha-D-glucosamine 1-phosphate + acetyl-CoA = N-acetyl-alpha-D-glucosamine 1-phosphate + CoA + H(+). The enzyme catalyses N-acetyl-alpha-D-glucosamine 1-phosphate + UTP + H(+) = UDP-N-acetyl-alpha-D-glucosamine + diphosphate. Its pathway is nucleotide-sugar biosynthesis; UDP-N-acetyl-alpha-D-glucosamine biosynthesis; N-acetyl-alpha-D-glucosamine 1-phosphate from alpha-D-glucosamine 6-phosphate (route II): step 2/2. It participates in nucleotide-sugar biosynthesis; UDP-N-acetyl-alpha-D-glucosamine biosynthesis; UDP-N-acetyl-alpha-D-glucosamine from N-acetyl-alpha-D-glucosamine 1-phosphate: step 1/1. The protein operates within bacterial outer membrane biogenesis; LPS lipid A biosynthesis. Its function is as follows. Catalyzes the last two sequential reactions in the de novo biosynthetic pathway for UDP-N-acetylglucosamine (UDP-GlcNAc). The C-terminal domain catalyzes the transfer of acetyl group from acetyl coenzyme A to glucosamine-1-phosphate (GlcN-1-P) to produce N-acetylglucosamine-1-phosphate (GlcNAc-1-P), which is converted into UDP-GlcNAc by the transfer of uridine 5-monophosphate (from uridine 5-triphosphate), a reaction catalyzed by the N-terminal domain. This chain is Bifunctional protein GlmU, found in Corynebacterium jeikeium (strain K411).